Reading from the N-terminus, the 72-residue chain is NAD(P)H-quinone oxidoreductase subunit O (72 aa).

Belongs to the complex I NdhO subunit family. As to quaternary structure, NDH-1 can be composed of about 15 different subunits; different subcomplexes with different compositions have been identified which probably have different functions.

It is found in the cellular thylakoid membrane. It catalyses the reaction a plastoquinone + NADH + (n+1) H(+)(in) = a plastoquinol + NAD(+) + n H(+)(out). The catalysed reaction is a plastoquinone + NADPH + (n+1) H(+)(in) = a plastoquinol + NADP(+) + n H(+)(out). Functionally, NDH-1 shuttles electrons from an unknown electron donor, via FMN and iron-sulfur (Fe-S) centers, to quinones in the respiratory and/or the photosynthetic chain. The immediate electron acceptor for the enzyme in this species is believed to be plastoquinone. Couples the redox reaction to proton translocation, and thus conserves the redox energy in a proton gradient. Cyanobacterial NDH-1 also plays a role in inorganic carbon-concentration. The sequence is that of NAD(P)H-quinone oxidoreductase subunit O from Synechococcus elongatus (strain ATCC 33912 / PCC 7942 / FACHB-805) (Anacystis nidulans R2).